Reading from the N-terminus, the 321-residue chain is Gibberellin 2-beta-dioxygenase 4 (321 aa).

The 114-residue stretch at Asp156–Pro269 folds into the Fe2OG dioxygenase domain. Fe cation-binding residues include His193, Asp195, and His250. Residue Arg260 is part of the active site.

This sequence belongs to the iron/ascorbate-dependent oxidoreductase family. GA2OX subfamily. It depends on Fe(2+) as a cofactor. As to expression, expressed at the base of the shoot apical meristem and developing leaf primordia.

It catalyses the reaction gibberellin A1 + 2-oxoglutarate + O2 = gibberellin A8 + succinate + CO2. Its pathway is plant hormone biosynthesis; gibberellin biosynthesis. Catalyzes the 2-beta-hydroxylation of several biologically active gibberellins, leading to the homeostatic regulation of their endogenous level. Catabolism of gibberellins (GAs) plays a central role in plant development. Converts GA9/GA20 to GA51/GA29 and GA4/GA1 to GA34/GA8. The protein is Gibberellin 2-beta-dioxygenase 4 (GA2OX4) of Arabidopsis thaliana (Mouse-ear cress).